A 152-amino-acid chain; its full sequence is Xanthine-guanine phosphoribosyltransferase (152 aa).

5-phospho-alpha-D-ribose 1-diphosphate contacts are provided by residues 37–38, Arg69, and 88–96; these read RG and DDLVDTGGT. Arg69 lines the GMP pocket. Asp89 lines the Mg(2+) pocket. The guanine site is built by Asp92 and Ile135. Positions 92 and 135 each coordinate xanthine. Residues 92–96 and 134–135 each bind GMP; these read DTGGT and WI.

Belongs to the purine/pyrimidine phosphoribosyltransferase family. XGPT subfamily. As to quaternary structure, homotetramer. Mg(2+) serves as cofactor.

The protein resides in the cell inner membrane. It catalyses the reaction GMP + diphosphate = guanine + 5-phospho-alpha-D-ribose 1-diphosphate. The enzyme catalyses XMP + diphosphate = xanthine + 5-phospho-alpha-D-ribose 1-diphosphate. It carries out the reaction IMP + diphosphate = hypoxanthine + 5-phospho-alpha-D-ribose 1-diphosphate. It functions in the pathway purine metabolism; GMP biosynthesis via salvage pathway; GMP from guanine: step 1/1. It participates in purine metabolism; XMP biosynthesis via salvage pathway; XMP from xanthine: step 1/1. Purine salvage pathway enzyme that catalyzes the transfer of the ribosyl-5-phosphate group from 5-phospho-alpha-D-ribose 1-diphosphate (PRPP) to the N9 position of the 6-oxopurines guanine and xanthine to form the corresponding ribonucleotides GMP (guanosine 5'-monophosphate) and XMP (xanthosine 5'-monophosphate), with the release of PPi. To a lesser extent, also acts on hypoxanthine. This chain is Xanthine-guanine phosphoribosyltransferase, found in Pectobacterium carotovorum subsp. carotovorum (strain PC1).